A 132-amino-acid polypeptide reads, in one-letter code: MDLPYYHGRLTKQDCETLLLKEGVDGNFLLRDSESIPGVLCLCVSFKNIVYTYRIFREKHGYYRIQTAEGSPKQVFPSLKELISKFEKPNQGMVVHLLKPIKRTSPSLRWRGLKLELETFVNSNSDYVDVLP.

The SH2 domain occupies Y5–I101. Y127 carries the phosphotyrosine modification.

As to quaternary structure, binds to the phosphorylated receptors CD84, SLAMF1, LY9 and CD244. Does not bind to non-phosphorylated SLAMF1. Interacts with SLAMF7 (via ITSM phosphorylated on 'Tyr-304'). Interacts with Src kinases HCK, LYN, FYN, FGR and LCK (via kinase domains). Interacts (phosphorylated at Tyr-127) with PLCG1.

Cytoplasmic adapter regulating receptors of the signaling lymphocytic activation molecule (SLAM) family such as CD84, SLAMF1, LY9 and CD244. In SLAM signaling seems to cooperate with SH2D1A/SAP. Plays a role in regulation of effector functions of natural killer (NK) cells by controlling signal transduction through CD244/2B4 without effecting its tyrosine phosphorylation; downstream signaling involves PLCG1 and ERK activation. Activation of SLAMF7-mediated NK cell function does not effect receptor tyrosine phosphorylation but distal signaling. In the context of NK cell-mediated cytotoxicity does not enhance conjugate formation with target cells but stimulates polarization of the microtubule-organizing center and cytotoxic granules toward the NK cell synapse. Negatively regulates CD40-induced cytokine production in dendritic cells downstream of SLAM family receptors probably by inducing activation of the PI3K pathway to inhibit p38 MAPK and JNK activation. The polypeptide is SH2 domain-containing protein 1B (SH2D1B) (Homo sapiens (Human)).